A 205-amino-acid chain; its full sequence is Ras-related protein RABC2b (205 aa).

20–27 (GDSGVGKS) contributes to the GTP binding site. Residues 41–49 (LAPTIGVDF) carry the Effector region motif. GTP is bound by residues 67-71 (DTAGQ), 127-130 (NKVD), and 157-158 (SA). Residues cysteine 202 and cysteine 203 are each lipidated (S-geranylgeranyl cysteine).

The protein belongs to the small GTPase superfamily. Rab family.

Its subcellular location is the cell membrane. Its function is as follows. Intracellular vesicle trafficking and protein transport. The sequence is that of Ras-related protein RABC2b (RABC2B) from Arabidopsis thaliana (Mouse-ear cress).